A 773-amino-acid chain; its full sequence is Membrane-bound aldehyde dehydrogenase [pyrroloquinoline-quinone] (773 aa).

Residues 1 to 44 constitute a signal peptide (tat-type signal); the sequence is MGRLNRFRLGKDGRREQASLSRRGFLVTSLGAGVMFGFARPSSA.

Pyrroloquinoline quinone serves as cofactor. In terms of processing, predicted to be exported by the Tat system. The position of the signal peptide cleavage has been experimentally proven.

The protein localises to the cell inner membrane. The catalysed reaction is an aldehyde + a quinone + H2O = a quinol + a carboxylate + H(+). The polypeptide is Membrane-bound aldehyde dehydrogenase [pyrroloquinoline-quinone] (Gluconacetobacter polyoxogenes (Acetobacter polyoxogenes)).